The primary structure comprises 272 residues: Soluble interferon gamma receptor OPG193 (272 aa).

Positions 1-13 (MRYIIILAVLFIN) are cleaved as a signal peptide. 3 N-linked (GlcNAc...) asparagine; by host glycosylation sites follow: asparagine 42, asparagine 150, and asparagine 267.

It belongs to the type II cytokine receptor family. In terms of assembly, homodimer. Interacts with host IFNG.

It localises to the secreted. Counteracts the antiviral effects of host IFN-gamma. Acts as a soluble IFN-gamma receptor and thus inhibits the interaction between host IFN-gamma and its receptor. The chain is Soluble interferon gamma receptor OPG193 (OPG193) from Homo sapiens (Human).